Here is a 695-residue protein sequence, read N- to C-terminus: Variediene synthase (695 aa).

Positions 1-23 (MVPTSLSPDDTSDPVPRSSSDIQ) are disordered. Residues 7–332 (SPDDTSDPVP…PRYHPWLCEE (326 aa)) are terpene cyclase. Asp-98 is a binding site for Mg(2+). Residues Asp-98, 184 to 187 (RIID), Asn-228, 232 to 236 (SFDIE), and 324 to 325 (RY) each bind substrate. The short motif at 98–102 (DNVVE) is the DDXXD 1 element. The NSE/DTE motif lies at 228–236 (NDYFSFDIE). The tract at residues 353 to 392 (RRSISGDSISSESSVWSGASDRSARSSVSSAPSLDEGKEP) is disordered. Positions 357 to 385 (SGDSISSESSVWSGASDRSARSSVSSAPS) are enriched in low complexity. 3 residues coordinate isopentenyl diphosphate: Lys-415, Arg-418, and His-447. Residues Asp-454 and Asp-458 each contribute to the Mg(2+) site. Positions 454 to 458 (DDIED) match the DDXXD 2 motif. Arg-463 is a binding site for dimethylallyl diphosphate. Arg-464 serves as a coordination point for isopentenyl diphosphate. Dimethylallyl diphosphate is bound by residues Lys-541, Thr-542, Gln-579, Asn-586, Lys-595, and Lys-605.

The protein in the N-terminal section; belongs to the terpene synthase family. In the C-terminal section; belongs to the FPP/GGPP synthase family. As to quaternary structure, hexamer. Mg(2+) serves as cofactor.

It catalyses the reaction isopentenyl diphosphate + (2E,6E)-farnesyl diphosphate = (2E,6E,10E)-geranylgeranyl diphosphate + diphosphate. It carries out the reaction (2E,6E,10E)-geranylgeranyl diphosphate = variediene + diphosphate. It participates in secondary metabolite biosynthesis; terpenoid biosynthesis. In terms of biological role, bifunctional terpene synthase converts DMAPP and IPP, and also GGPP, into variediene as a single product. The C-terminal prenyltransferase domain of AbVS catalyzes formation of GGPP, whereas the N-terminal terpene cyclase domain catalyzes the cyclization of GGPP to variediene. The protein is Variediene synthase of Aspergillus brasiliensis (strain CBS 101740 / IMI 381727 / IBT 21946).